The following is a 554-amino-acid chain: (+)-delta-cadinene synthase isozyme XC14 (554 aa).

Residues 1-16 (MASQVSQMPSSSPLSS) are compositionally biased toward low complexity. A disordered region spans residues 1–23 (MASQVSQMPSSSPLSSNKDEMRP). D307, D311, and D451 together coordinate Mg(2+). The DDXXD motif motif lies at 307–311 (DDTYD).

This sequence belongs to the terpene synthase family. It depends on Mg(2+) as a cofactor.

It catalyses the reaction (2E,6E)-farnesyl diphosphate = (1S,8aR)-delta-cadinene + diphosphate. Its pathway is secondary metabolite biosynthesis; terpenoid biosynthesis. Its function is as follows. Responsible for the cyclization of trans,trans-farnesyl diphosphate (FPP) to (+)-delta cadinene. The chain is (+)-delta-cadinene synthase isozyme XC14 from Gossypium arboreum (Tree cotton).